The following is a 470-amino-acid chain: MAASGTSATFRASVSSAPSSSSQLTHLKSPFKAVKYTPLPSSRSKSSSFSVSCTIAKDPPVLMAAGSDPALWQRPDSFGRFGKFGGKYVPETLMHALSELESAFYALATDDDFQRELAGILKDYVGRESPLYFAERLTEHYRRENGEGPLIYLKREDLNHTGAHKINNAVAQALLAKRLGKKRIIAETGAGQHGVATATVCARFGLECIIYMGAQDMERQALNVFRMRLLGAEVRGVHSGTATLKDATSEAIRDWVTNVETTHYILGSVAGPHPYPMMVRDFHAVIGKETRKQALEKWGGKPDVLVACVGGGSNAMGLFHEFVNDTEVRMIGVEAAGFGLDSGKHAATLTKGDVGVLHGAMSYLLQDDDGQIIEPHSISAGLDYPGVGPEHSFFKDMGRAEYYSITDEEALEAFKRVSRLEGIIPALETSHALAYLEKLCPTLSDGTRVVLNFSGRGDKDVQTVAKYLDV.

Polar residues predominate over residues 1–10 (MAASGTSATF). Positions 1-24 (MAASGTSATFRASVSSAPSSSSQL) are disordered. The segment covering 12–22 (ASVSSAPSSSS) has biased composition (low complexity). At Lys-165 the chain carries N6-(pyridoxal phosphate)lysine.

This sequence belongs to the TrpB family. Tetramer of two alpha and two beta chains. Pyridoxal 5'-phosphate serves as cofactor.

The protein resides in the plastid. The protein localises to the chloroplast. It carries out the reaction (1S,2R)-1-C-(indol-3-yl)glycerol 3-phosphate + L-serine = D-glyceraldehyde 3-phosphate + L-tryptophan + H2O. It functions in the pathway amino-acid biosynthesis; L-tryptophan biosynthesis; L-tryptophan from chorismate: step 5/5. In terms of biological role, the beta subunit is responsible for the synthesis of L-tryptophan from indole and L-serine. The chain is Tryptophan synthase beta chain 1, chloroplastic (TSB1) from Arabidopsis thaliana (Mouse-ear cress).